The following is a 1744-amino-acid chain: Retrotransposon-like protein 1 (1744 aa).

Disordered regions lie at residues 1-416 (MIEP…SPEE), 823-859 (READ…DQSG), and 1287-1439 (SSET…EVPS). Residues 19 to 30 (SSKQMESSEGSS) are compositionally biased toward low complexity. Residues 31 to 40 (NTVEETPGSS) show a composition bias toward polar residues. Residues 41 to 80 (GAQAGAQAGAQAEAQAETQVEAQAEAQAEAQVEAQVEAQA) are compositionally biased toward low complexity. Residues 269 to 318 (DGSNQESSDGSNHELSNGSNHESSFGSNPESSDVSNLESSGGSNQESSDG) show a composition bias toward polar residues. Low complexity predominate over residues 332–361 (SDNSNQELSDNSNQESSDSSNQSSDISNQE). 3 stretches are compositionally biased toward acidic residues: residues 385-407 (SDQD…GEEE), 837-846 (GSDDLSESEP), and 1291-1437 (EDKE…DEEV). A run of 2 helical transmembrane segments spans residues 1473 to 1493 (FFRG…LVML) and 1520 to 1540 (LILD…AQLL).

As to expression, expressed in placenta and in various tissues in late-fetal stage.

It is found in the membrane. Its function is as follows. Plays an essential role in capillaries endothelial cells for the maintenance of feto-maternal interface and for development of the placenta. This is Retrotransposon-like protein 1 (Rtl1) from Mus musculus (Mouse).